Reading from the N-terminus, the 153-residue chain is Sec-independent protein translocase protein TatB (153 aa).

A helical transmembrane segment spans residues 1–21 (MFGISFSELLLVGLVALLVLG). A disordered region spans residues 78–153 (MFAQNQHPET…HDSSLPPRAP (76 aa)).

The protein belongs to the TatB family. In terms of assembly, the Tat system comprises two distinct complexes: a TatABC complex, containing multiple copies of TatA, TatB and TatC subunits, and a separate TatA complex, containing only TatA subunits. Substrates initially bind to the TatABC complex, which probably triggers association of the separate TatA complex to form the active translocon.

The protein resides in the cell inner membrane. In terms of biological role, part of the twin-arginine translocation (Tat) system that transports large folded proteins containing a characteristic twin-arginine motif in their signal peptide across membranes. Together with TatC, TatB is part of a receptor directly interacting with Tat signal peptides. TatB may form an oligomeric binding site that transiently accommodates folded Tat precursor proteins before their translocation. In Pseudomonas savastanoi pv. phaseolicola (strain 1448A / Race 6) (Pseudomonas syringae pv. phaseolicola (strain 1448A / Race 6)), this protein is Sec-independent protein translocase protein TatB.